Consider the following 2896-residue polypeptide: MSEKSGQSTKAKDGKKYATLSLFNTYKGKSLETQKTTARHGLQSLGKVGISRRMPPPANLPSLKAENKGNDPNVNIVPKDGTGWASKQEQHEEEKTPEVPPAQPKPGVAAPPEVAPAPKSWASNKQGGQGDGIQVNSQFQQEFPSLQAAGDQEKKEKETNDDNYGPGPSLRPPNVACWRDGGKAAGSPSSSDQDEKLPGQDESTAGTSEQNDILKVVEKRIACGPPQAKLNGQQAALASQYRAMMPPYMFQQYPRMTYPPLHGPMRFPPSLSETNKGLRGRGPPPSWASEPERPSILSASELKELDKFDNLDAEADEGWAGAQMEVDYTEQLNFSDDDEQGSNSPKENNSEDQGSKASENNENKKETDEVSNTKSSSQIPAQPSVAKVPYGKGPSFNQERGTSSHLPPPPKLLAQQHPPPDRQAVPGRPGPFPSKQQVADEDEIWKQRRRQQSEISAAVERARKRREEEERRMEEQRKAACAEKLKRLDEKLGILEKQPSPEEIREREREKEREREKELEKEQEQEREKEREKDRERQQEKEKELEKEQEKQREMEKERKQEKEKELERQKEKEKELQKMKEQEKECELEKEREKLEEKIEPREPNLEPMVEKQESENSCNKEEEPVFTRQDSNRSEKEATPVVHETEPESGSQPRPAVLSGYFKQFQKSLPPRFQRQQEQMKQQQWQQQQQQGVLPQTVPSQPSSSTVPPPPHRPLYQPMQPHPQHLASMGFDPRWLMMQSYMDPRMMSGRPAMDIPPIHPGMIPPKPLMRRDQMEGSPNSSESFEHIARSARDHAISLSEPRMLWGSDPYPHAEPQQATTPKATEEPEDVRSEAALDQEQITAAYSVEHNQLEAHPKADFIRESSEAQVQKFLSRSVEDVRPHHTDANNQSACFEAPDQKTLSAPQEERISAVESQPSRKRSVSHGSNHTQKPDEQRSEPSAGIPKVTSRCIDSKEPIERPEEKPKKEGFIRSSEGPKPEKVYKSKSETRWGPRPSSNRREEVNDRPVRRSGPIKKPVLRDMKEEREQRKEKEGEKAEKVTEKVVVKPEKTEKKDLPPPPPPPQPPAPIQPQSVPPPIQPEAEKFPSTETATLAQKPSQDTEKPLEPVSTVQVEPAVKTVNQQTMAAPVVKEEKQPEKVISKDLVIERPRPDSRPAVKKESTLPPRTYWKEARERDWFPDQGYRGRGRGEYYSRGRSYRGSYGGRGRGGRGHTRDYPQYRDNKPRAEHIPSGPLRQREESETRSESSDFEVVPKRRRQRGSETDTDSEIHESASDKDSLSKGKLPKREERPENKKPVKPHSSFKPDNHVRIDNRLLEKPYVRDDDKAKPGFLPKGEPTRRGRGGTFRRGGRDPGGRPSRPSTLRRPAYRDNQWNPRQSEVPKPEDGEPPRRHEQFIPIAADKRPPKFERKFDPARERPRRQRPTRPPRQDKPPRFRRLREREAASKSNEVVAVPTNGTVNNVAQEPVNTLGDISGNKTPDLSNQNSSDQANEEWETASESSDFNERRERDEKKNADLNAQTVVKVGENVLPPKREIAKRSFSSQRPVDRQNRRGNNGPPKSGRNFSGPRNERRSGPPSKSGKRGPFDDQPAGTTGVDLINGSSAHHQEGVPNGTGQKNSKDSTGKKREDPKPGPKKPKEKVDALSQFDLNNYASVVIIDDHPEVTVIEDPQSNLNDDGFTEVVSKKQQKRLQDEERRKKEEQVIQVWNKKNANEKGRSQTSKLPPRFAKKQATGIQQAQSSASVPPLASAPLPPSTSASVPASTSAPLPATLTPVPASTSAPVPASTLAPVLASTSAPVPASPLAPVSASASVSASVPASTSAAAITSSSAPASAPAPTPILASVSTPASVTILASASIPILASALASTSAPTPAPAASSPAAPVITAPTIPASAPTASVPLAPASASAPAPAPTPVSAPNPAPPAPAQTQAQTHKPVQNPLQTTSQSSKQPPPSIRLPSAQTPNGTDYVASGKSIQTPQSHGTLTAELWDNKVAPPAVLNDISKKLGPISPPQPPSVSAWNKPLTSFGSAPSSEGAKNGQESGLEIGTDTIQFGAPASNGNENEVVPVLSEKSADKIPEPKEQRQKQPRAGPIKAQKLPDLSPVENKEHKPGPIGKERSLKNRKVKDAQQVEPEGQEKPSPATVRSTDPVTTKETKAVSEMSTEIGTMISVSSAEYGTNAKESVTDYTTPSSSLPNTVATNNTKMEDTLVNNVPLPNTLPLPKRETIQQSSSLTSVPPTTFSLTFKMESARKAWENSPNVREKGSPVTSTAPPIATGVSSSASGPSTANYNSFSSASMPQIPVASVTPTASLSGAGTYTTSSLSTKSTTTSDPPNICKVKPQQLQTSSLPSASHFSQLSCMPSLIAQQQQNPQVYVSQSAAAQIPAFYMDTSHLFNTQHARLAPPSLAQQQGFQPGLSQPTSVQQIPIPIYAPLQGQHQAQLSLGAGPAVSQAQELFSSSLQPYRSQPAFMQSSLSQPSVVLSGTAIHNFPTVQHQELAKAQSGLAFQQTSNTQPIPILYEHQLGQASGLGGSQLIDTHLLQARANLTQASNLYSGQVQQPGQTNFYNTAQSPSALQQVTVPLPASQLSLPNFGSTGQPLIALPQTLQPPLQHTTPQAQAQSLSRPAQVSQPFRGLIPAGTQHSMIATTGKMSEMELKAFGSGIDIKPGTPPIAGRSTTPTSSPFRATSTSPNSQSSKMNSIVYQKQFQSAPATVRMTQPFPTQFAPQILSQPNLVPPLVRAPHTNTFPAPVQRPPMALASQMPPPLTTGLMSHARLPHVARGPCGSLSGVRGNQAQAALKAEQDMKAKQRAEVLQSTQRFFSEQQQSKQIGGGKAQKVDSDSSKPPETLTDPPGVCQEKVEEKPPPAPSIATKPVRTGPIKPQAIKTEETKS.

Lys-27 carries the N6-acetyllysine modification. The segment at 28–212 is disordered; it reads GKSLETQKTT…STAGTSEQND (185 aa). Basic and acidic residues predominate over residues 88 to 97; that stretch reads QEQHEEEKTP. Residues 105 to 119 are compositionally biased toward low complexity; sequence KPGVAAPPEVAPAPK. A compositionally biased stretch (polar residues) spans 134–144; sequence QVNSQFQQEFP. Residues 151–160 show a composition bias toward basic and acidic residues; it reads DQEKKEKETN. Phosphoserine occurs at positions 187 and 191. Residues 201 to 211 are compositionally biased toward polar residues; sequence DESTAGTSEQN. Position 242 is an asymmetric dimethylarginine; alternate (Arg-242). Arg-242 carries the omega-N-methylarginine; alternate modification. Asymmetric dimethylarginine occurs at positions 255 and 266. Disordered regions lie at residues 264 to 729 and 750 to 788; these read PMRF…QHLA and SGRP…SFEH. Arg-279 and Arg-281 each carry omega-N-methylarginine. The span at 301–310 shows a compositional bias: basic and acidic residues; that stretch reads ELKELDKFDN. Ser-335 is subject to Phosphoserine. Polar residues predominate over residues 341–358; the sequence is GSNSPKENNSEDQGSKAS. Residues 359-368 show a composition bias toward basic and acidic residues; the sequence is ENNENKKETD. Over residues 370 to 381 the composition is skewed to polar residues; the sequence is VSNTKSSSQIPA. Lys-392 is modified (N6-acetyllysine). Phosphoserine occurs at positions 395 and 500. The span at 395 to 405 shows a compositional bias: polar residues; sequence SFNQERGTSSH. Over residues 465-648 the composition is skewed to basic and acidic residues; the sequence is RREEEERRME…EATPVVHETE (184 aa). Residues 676 to 708 show a composition bias toward low complexity; the sequence is QRQQEQMKQQQWQQQQQQGVLPQTVPSQPSSST. A compositionally biased stretch (pro residues) spans 759–769; sequence PIHPGMIPPKP. Phosphoserine occurs at positions 779, 785, and 801. Residues 804–1118 are disordered; it reads RMLWGSDPYP…PVSTVQVEPA (315 aa). 3 stretches are compositionally biased toward basic and acidic residues: residues 825 to 836, 852 to 867, and 878 to 888; these read ATEEPEDVRSEA, NQLE…RESS, and SVEDVRPHHTD. Ser-867, Ser-878, Ser-920, and Ser-929 each carry phosphoserine. Basic and acidic residues-rich tracts occupy residues 954 to 993, 1000 to 1010, and 1020 to 1058; these read IDSK…ETRW, NRREEVNDRPV, and VLRD…KKDL. Positions 1020 to 1046 form a coiled coil; it reads VLRDMKEEREQRKEKEGEKAEKVTEKV. Pro residues predominate over residues 1059–1081; sequence PPPPPPPQPPAPIQPQSVPPPIQ. Residues 1089–1100 show a composition bias toward polar residues; the sequence is STETATLAQKPS. Residue Lys-1133 forms a Glycyl lysine isopeptide (Lys-Gly) (interchain with G-Cter in SUMO2) linkage. Composition is skewed to basic and acidic residues over residues 1143 to 1163, 1170 to 1180, 1214 to 1230, and 1237 to 1248; these read SKDL…KKES, YWKEARERDWF, HTRD…RAEH, and RQREESETRSES. Disordered stretches follow at residues 1143 to 1647, 1670 to 1785, 1905 to 1991, 2005 to 2164, 2218 to 2238, 2257 to 2290, 2317 to 2341, and 2668 to 2701; these read SKDL…DALS, EDPQ…SAPV, APAS…TAEL, ISKK…VSEM, LPNT…SLTS, WENS…GPST, GAGT…NICK, and DIKP…QSSK. Phosphoserine occurs at positions 1242, 1246, 1248, 1249, and 1263. Composition is skewed to basic and acidic residues over residues 1261 to 1297, 1305 to 1330, 1381 to 1418, and 1429 to 1446; these read RGSE…ENKK, FKPD…DKAK, EVPK…PARE, and PRQD…REAA. Phosphothreonine is present on residues Thr-1265 and Thr-1267. 2 stretches are compositionally biased toward polar residues: residues 1457–1469 and 1477–1491; these read TNGT…QEPV and GNKT…SSDQ. Residues 1505 to 1517 are compositionally biased toward basic and acidic residues; the sequence is FNERRERDEKKNA. The residue at position 1544 (Ser-1544) is a Phosphoserine. Basic and acidic residues-rich tracts occupy residues 1620–1634 and 1692–1704; these read NSKD…DPKP and RLQD…KEEQ. Residues 1682-1717 are a coiled coil; the sequence is TEVVSKKQQKRLQDEERRKKEEQVIQVWNKKNANEK. A compositionally biased stretch (low complexity) spans 1742–1785; it reads SSASVPPLASAPLPPSTSASVPASTSAPLPATLTPVPASTSAPV. A compositionally biased stretch (pro residues) spans 1913-1929; that stretch reads APAPTPVSAPNPAPPAP. Low complexity predominate over residues 1943–1952; that stretch reads PLQTTSQSSK. At Thr-1965 the chain carries Phosphothreonine. Positions 1976–1986 are enriched in polar residues; sequence KSIQTPQSHGT. 2 positions are modified to phosphoserine: Ser-1983 and Ser-2013. The span at 2019-2035 shows a compositional bias: polar residues; sequence SVSAWNKPLTSFGSAPS. Over residues 2075 to 2088 the composition is skewed to basic and acidic residues; the sequence is KSADKIPEPKEQRQ. A Phosphoserine modification is found at Ser-2105. Residues 2108–2132 are compositionally biased toward basic and acidic residues; sequence ENKEHKPGPIGKERSLKNRKVKDAQ. A Phosphoserine modification is found at Ser-2143. The segment covering 2257-2267 has biased composition (basic and acidic residues); that stretch reads WENSPNVREKG. Ser-2260 carries the phosphoserine modification. Polar residues predominate over residues 2269–2290; that stretch reads PVTSTAPPIATGVSSSASGPST. Low complexity predominate over residues 2320–2334; the sequence is TYTTSSLSTKSTTTS. Phosphothreonine is present on residues Thr-2673 and Thr-2682. Over residues 2679 to 2701 the composition is skewed to polar residues; it reads RSTTPTSSPFRATSTSPNSQSSK. 2 positions are modified to phosphoserine: Ser-2686 and Ser-2694. Residue Arg-2814 is modified to Omega-N-methylarginine. Asymmetric dimethylarginine; alternate is present on Arg-2823. An Omega-N-methylarginine; alternate modification is found at Arg-2823. Over residues 2824–2833 the composition is skewed to polar residues; sequence FFSEQQQSKQ. A disordered region spans residues 2824–2896; the sequence is FFSEQQQSKQ…QAIKTEETKS (73 aa).

In terms of tissue distribution, overexpressed in bladder cancer.

It localises to the cytoplasm. Its subcellular location is the stress granule. Required for efficient formation of stress granules. This chain is Protein PRRC2C, found in Homo sapiens (Human).